The following is a 174-amino-acid chain: Protein C2-DOMAIN ABA-RELATED 2 (174 aa).

The residue at position 1 (Met-1) is an N-acetylmethionine. The C2 domain maps to Met-1–Gly-104. Arg-21, Asp-22, Asp-27, Asp-73, Arg-74, Asp-75, and Asp-81 together coordinate Ca(2+).

It belongs to the plant CAR protein family. In terms of assembly, binds to PYR/PYL/RCAR abscisic acid intracellular receptors in an ABA-independent manner, both at the plasma membrane and in the nucleus. It depends on Ca(2+) as a cofactor.

It is found in the cell membrane. Its subcellular location is the nucleus. Functionally, stimulates the GTPase/ATPase activities of Obg-like ATPases. Mediates the transient calcium-dependent interaction of PYR/PYL/RCAR abscisic acid (ABA) receptors with the plasma membrane and thus regulates ABA sensitivity. The chain is Protein C2-DOMAIN ABA-RELATED 2 from Arabidopsis thaliana (Mouse-ear cress).